Reading from the N-terminus, the 213-residue chain is Octanoyltransferase (213 aa).

The BPL/LPL catalytic domain occupies 35–213 (DKHGDAVLLL…ERHLPTLVGA (179 aa)). Residues 73–80 (RGGKITWH), 145–147 (AIG), and 158–160 (GFS) contribute to the substrate site. Cys176 serves as the catalytic Acyl-thioester intermediate.

Belongs to the LipB family.

Its subcellular location is the cytoplasm. The enzyme catalyses octanoyl-[ACP] + L-lysyl-[protein] = N(6)-octanoyl-L-lysyl-[protein] + holo-[ACP] + H(+). It participates in protein modification; protein lipoylation via endogenous pathway; protein N(6)-(lipoyl)lysine from octanoyl-[acyl-carrier-protein]: step 1/2. Functionally, catalyzes the transfer of endogenously produced octanoic acid from octanoyl-acyl-carrier-protein onto the lipoyl domains of lipoate-dependent enzymes. Lipoyl-ACP can also act as a substrate although octanoyl-ACP is likely to be the physiological substrate. The sequence is that of Octanoyltransferase from Salinispora arenicola (strain CNS-205).